A 179-amino-acid chain; its full sequence is NADH:FAD oxidoreductase (179 aa).

Position 48 to 51 (48 to 51) interacts with FAD; that stretch reads TCSA. 54-57 is a binding site for NAD(+); that stretch reads SVCD. FAD contacts are provided by residues 65-71, A99, 104-109, and S144; these read CINRKSY and VPMEER. NAD(+) is bound by residues H145 and 166–169; that span reads YHRR. Y166 is a binding site for FAD.

The protein belongs to the non-flavoprotein flavin reductase family. In terms of assembly, homodimer. The chlorophenol-4-monooxygenase is composed of an oxygenase component TftD and a reductase component TftC.

It catalyses the reaction FADH2 + NAD(+) = FAD + NADH + 2 H(+). It functions in the pathway xenobiotic degradation. Functionally, reductase component of a two-component system that degrades 2,4,5-trichlorophenol. TftC provides the FADH(2) required by TftD. TftD oxidizes 2,4,5-trichlorophenol (2,4,5-TCP) to 2,5-dichloro-p-benzoquinone, which is chemically reduced to 2,5-dichloro-p-hydroquinone (2,5-DiCHQ). Then, TftD oxidizes the latter to 5-chloro-2-hydroxy-p-benzoquinone. The chain is NADH:FAD oxidoreductase (tftC) from Burkholderia cepacia (Pseudomonas cepacia).